A 137-amino-acid polypeptide reads, in one-letter code: NADH dehydrogenase [ubiquinone] 1 beta subcomplex subunit 7 (137 aa).

The N-myristoyl glycine moiety is linked to residue G2. The region spanning 56–98 (RDYCAHYLIRLLKCKRDSFPNFLACKQERHDWDYCEHRDYVMR) is the CHCH domain. The short motif at 59–69 (CAHYLIRLLKC) is the Cx9C motif 1 element. Disulfide bonds link C59–C90 and C69–C80. S73 carries the post-translational modification Phosphoserine. The Cx9C motif 2 motif lies at 80-90 (CKQERHDWDYC). The segment at 113–137 (KRREKKAAELAKGQGPGEVDPKVAL) is disordered.

This sequence belongs to the complex I NDUFB7 subunit family. Complex I is composed of 45 different subunits.

The protein localises to the mitochondrion inner membrane. It is found in the mitochondrion intermembrane space. In terms of biological role, accessory subunit of the mitochondrial membrane respiratory chain NADH dehydrogenase (Complex I), that is believed not to be involved in catalysis. Complex I functions in the transfer of electrons from NADH to the respiratory chain. The immediate electron acceptor for the enzyme is believed to be ubiquinone. The sequence is that of NADH dehydrogenase [ubiquinone] 1 beta subcomplex subunit 7 (NDUFB7) from Gorilla gorilla gorilla (Western lowland gorilla).